Here is a 209-residue protein sequence, read N- to C-terminus: PRA1 family protein B1 (209 aa).

Position 2 is an N-acetylalanine (alanine 2). The next 5 membrane-spanning stretches (helical) occupy residues 73-93, 95-115, 133-153, 154-174, and 185-205; these read LAYF…FSLF, HPLS…LYLF, ETLL…SVGS, LLTS…AFVV, and PANA…AAAV.

It belongs to the PRA1 family. Can form homodimer. Interacts with PRA1B2, PRA1B3, PRA1B4, PRA1B5, PRA1B6 and PRA1E.

Its subcellular location is the endosome membrane. In terms of biological role, may be involved in both secretory and endocytic intracellular trafficking in the endosomal/prevacuolar compartments. This is PRA1 family protein B1 (PRA1B1) from Arabidopsis thaliana (Mouse-ear cress).